The following is a 349-amino-acid chain: Protein-glutamate methylesterase/protein-glutamine glutaminase (349 aa).

The region spanning 5–122 is the Response regulatory domain; sequence RVLCVDDSAL…REGMLAYSEL (118 aa). Asp56 carries the post-translational modification 4-aspartylphosphate. The region spanning 152 to 344 is the CheB-type methylesterase domain; it reads LLSSEKLIAI…QRMLAQISSG (193 aa). Residues Ser164, His190, and Asp286 contribute to the active site.

This sequence belongs to the CheB family. Phosphorylated by CheA. Phosphorylation of the N-terminal regulatory domain activates the methylesterase activity.

Its subcellular location is the cytoplasm. It catalyses the reaction [protein]-L-glutamate 5-O-methyl ester + H2O = L-glutamyl-[protein] + methanol + H(+). It carries out the reaction L-glutaminyl-[protein] + H2O = L-glutamyl-[protein] + NH4(+). In terms of biological role, involved in chemotaxis. Part of a chemotaxis signal transduction system that modulates chemotaxis in response to various stimuli. Catalyzes the demethylation of specific methylglutamate residues introduced into the chemoreceptors (methyl-accepting chemotaxis proteins or MCP) by CheR. Also mediates the irreversible deamidation of specific glutamine residues to glutamic acid. The sequence is that of Protein-glutamate methylesterase/protein-glutamine glutaminase from Yersinia pseudotuberculosis serotype I (strain IP32953).